We begin with the raw amino-acid sequence, 122 residues long: Large ribosomal subunit protein bL12 (122 aa).

The protein belongs to the bacterial ribosomal protein bL12 family. In terms of assembly, homodimer. Part of the ribosomal stalk of the 50S ribosomal subunit. Forms a multimeric L10(L12)X complex, where L10 forms an elongated spine to which 2 to 4 L12 dimers bind in a sequential fashion. Binds GTP-bound translation factors.

Functionally, forms part of the ribosomal stalk which helps the ribosome interact with GTP-bound translation factors. Is thus essential for accurate translation. The polypeptide is Large ribosomal subunit protein bL12 (Mycoplasma pneumoniae (strain ATCC 29342 / M129 / Subtype 1) (Mycoplasmoides pneumoniae)).